A 232-amino-acid chain; its full sequence is Ion-translocating oxidoreductase complex subunit E (232 aa).

Helical transmembrane passes span 18-38 (GLVQ…LTNA), 39-59 (LGLG…VSLV), 69-89 (IPVF…VINA), 93-113 (GLYL…VIIG), 128-148 (AFDG…LGAV), and 182-202 (SFLL…LIAG).

The protein belongs to the NqrDE/RnfAE family. In terms of assembly, the complex is composed of six subunits: RnfA, RnfB, RnfC, RnfD, RnfE and RnfG.

The protein resides in the cell inner membrane. In terms of biological role, part of a membrane-bound complex that couples electron transfer with translocation of ions across the membrane. This is Ion-translocating oxidoreductase complex subunit E from Shewanella amazonensis (strain ATCC BAA-1098 / SB2B).